The following is an 84-amino-acid chain: Small ribosomal subunit protein uS17 (84 aa).

The protein belongs to the universal ribosomal protein uS17 family. In terms of assembly, part of the 30S ribosomal subunit.

One of the primary rRNA binding proteins, it binds specifically to the 5'-end of 16S ribosomal RNA. The protein is Small ribosomal subunit protein uS17 of Borreliella afzelii (strain PKo) (Borrelia afzelii).